Reading from the N-terminus, the 189-residue chain is NADH-quinone oxidoreductase subunit B (189 aa).

[4Fe-4S] cluster-binding residues include Cys-39, Cys-40, Cys-104, and Cys-135.

Belongs to the complex I 20 kDa subunit family. As to quaternary structure, NDH-1 is composed of 14 different subunits. Subunits NuoB, C, D, E, F, and G constitute the peripheral sector of the complex. Requires [4Fe-4S] cluster as cofactor.

The protein resides in the cell inner membrane. The enzyme catalyses a quinone + NADH + 5 H(+)(in) = a quinol + NAD(+) + 4 H(+)(out). In terms of biological role, NDH-1 shuttles electrons from NADH, via FMN and iron-sulfur (Fe-S) centers, to quinones in the respiratory chain. The immediate electron acceptor for the enzyme in this species is believed to be a menaquinone. Couples the redox reaction to proton translocation (for every two electrons transferred, four hydrogen ions are translocated across the cytoplasmic membrane), and thus conserves the redox energy in a proton gradient. This is NADH-quinone oxidoreductase subunit B from Chlorobaculum parvum (strain DSM 263 / NCIMB 8327) (Chlorobium vibrioforme subsp. thiosulfatophilum).